The following is a 407-amino-acid chain: Proteasome-activating nucleotidase (407 aa).

The stretch at 22 to 67 (KEKTQIAELESKVLRLELKNKDISRENVQIKKENEILKRELDKLRI) forms a coiled coil. Residues 192 to 197 (GTGKTL) and His331 each bind ATP. The interval 405–407 (MYG) is docks into pockets in the proteasome alpha-ring to cause gate opening.

This sequence belongs to the AAA ATPase family. In terms of assembly, homohexamer. The hexameric complex has a two-ring architecture resembling a top hat that caps the 20S proteasome core at one or both ends. Upon ATP-binding, the C-terminus of PAN interacts with the alpha-rings of the proteasome core by binding to the intersubunit pockets.

The protein localises to the cytoplasm. Its function is as follows. ATPase which is responsible for recognizing, binding, unfolding and translocation of substrate proteins into the archaeal 20S proteasome core particle. Is essential for opening the gate of the 20S proteasome via an interaction with its C-terminus, thereby allowing substrate entry and access to the site of proteolysis. Thus, the C-termini of the proteasomal ATPase function like a 'key in a lock' to induce gate opening and therefore regulate proteolysis. Unfolding activity requires energy from ATP hydrolysis, whereas ATP binding alone promotes ATPase-20S proteasome association which triggers gate opening, and supports translocation of unfolded substrates. The polypeptide is Proteasome-activating nucleotidase (Methanococcus maripaludis (strain C6 / ATCC BAA-1332)).